Reading from the N-terminus, the 582-residue chain is Insulin-like growth factor 2 mRNA-binding protein 3 (582 aa).

RRM domains are found at residues 2-75 and 81-156; these read NKLY…HSVP and CKLQ…YIPD. Residues 164-190 form a disordered region; sequence PAVGGRRGFNPRGPPRQGSPSLGARPK. At S182 the chain carries Phosphoserine. KH domains follow at residues 194 to 259, 275 to 342, 408 to 473, and 490 to 556; these read DVPL…CRNI, EIPL…EEEI, SETV…QGRI, and KLEA…QRKI. Positions 562-582 are disordered; that stretch reads QVRRQQQPKPSAAGPPVARRK.

Belongs to the RRM IMP/VICKZ family. In terms of assembly, homodimer and multimer.

The protein localises to the cytoplasm. It localises to the nucleus. Its subcellular location is the P-body. The protein resides in the stress granule. In terms of biological role, RNA-binding factor that may recruit target transcripts to cytoplasmic protein-RNA complexes (mRNPs). This transcript 'caging' into mRNPs allows mRNA transport and transient storage. It also modulates the rate and location at which target transcripts encounter the translational apparatus and shields them from endonuclease attacks or microRNA-mediated degradation. Preferentially binds to N6-methyladenosine (m6A)-containing mRNAs and increases their stability. Involved in neuronal crest migration. This is Insulin-like growth factor 2 mRNA-binding protein 3 (igf2bp3) from Danio rerio (Zebrafish).